The following is a 300-amino-acid chain: Ribonuclease HIII (300 aa).

The 215-residue stretch at 86-300 (RSRIGVDESG…FNEVLGSGNQ (215 aa)) folds into the RNase H type-2 domain. Residues Asp92, Glu93, and Asp196 each contribute to the a divalent metal cation site.

Belongs to the RNase HII family. RnhC subfamily. Requires Mn(2+) as cofactor. It depends on Mg(2+) as a cofactor.

The protein localises to the cytoplasm. The catalysed reaction is Endonucleolytic cleavage to 5'-phosphomonoester.. Endonuclease that specifically degrades the RNA of RNA-DNA hybrids. This chain is Ribonuclease HIII, found in Chlamydia trachomatis serovar L2 (strain ATCC VR-902B / DSM 19102 / 434/Bu).